The primary structure comprises 502 residues: ATP synthase subunit alpha (502 aa).

169–176 (GDRQVGKT) contributes to the ATP binding site.

The protein belongs to the ATPase alpha/beta chains family. As to quaternary structure, F-type ATPases have 2 components, CF(1) - the catalytic core - and CF(0) - the membrane proton channel. CF(1) has five subunits: alpha(3), beta(3), gamma(1), delta(1), epsilon(1). CF(0) has three main subunits: a(1), b(2) and c(9-12). The alpha and beta chains form an alternating ring which encloses part of the gamma chain. CF(1) is attached to CF(0) by a central stalk formed by the gamma and epsilon chains, while a peripheral stalk is formed by the delta and b chains.

It localises to the cell membrane. The catalysed reaction is ATP + H2O + 4 H(+)(in) = ADP + phosphate + 5 H(+)(out). In terms of biological role, produces ATP from ADP in the presence of a proton gradient across the membrane. The alpha chain is a regulatory subunit. In Lysinibacillus sphaericus (strain C3-41), this protein is ATP synthase subunit alpha.